The sequence spans 425 residues: CBS domain-containing protein CBSX6 (425 aa).

A CBS 1 domain is found at 16-90 (GKPEMVEFYE…FLAKTECLQE (75 aa)). Residues 159–172 (SENSSSSSGLSADS) are compositionally biased toward low complexity. The segment at 159-182 (SENSSSSSGLSADSTNRPTTSMTS) is disordered. The span at 173–182 (TNRPTTSMTS) shows a compositional bias: polar residues. A run of 2 helical transmembrane segments spans residues 200 to 220 (IGVLGALAPLPLTSISTLGII) and 275 to 295 (YLAAAWALANLYAGQFVMGVE). Positions 347 to 409 (MYRGRSAPLT…TAVTKQPSAF (63 aa)) constitute a CBS 2 domain.

The protein localises to the vacuole membrane. In Arabidopsis thaliana (Mouse-ear cress), this protein is CBS domain-containing protein CBSX6 (CBSX6).